Consider the following 247-residue polypeptide: Lysosomal membrane ascorbate-dependent ferrireductase CYB561A3 (247 aa).

At 1–3 (MRG) the chain is on the cytoplasmic side. Residues 4 to 24 (IVGFYITYLLCLILGIACVVL) traverse the membrane as a helical segment. Residues 13–223 (LCLILGIACV…FGLVVLKILS (211 aa)) enclose the Cytochrome b561 domain. Topologically, residues 25–46 (VVHWNFMYRDGFAWDGSSKNFN) are lumenal. A helical membrane pass occupies residues 47–67 (WHPVLMVTGMLVLYGNAAVVY). Heme b contacts are provided by H48 and R68. The Cytoplasmic segment spans residues 68-82 (RIPLTWGHNKLPWKL). L-ascorbate is bound by residues K77 and K81. The chain crosses the membrane as a helical span at residues 83-103 (LHAGLLLLSFIFSVIGLCAVF). Heme b is bound by residues H84, 113–116 (NLYS), and H118. At 104–120 (NFHNVHHTANLYSLHSW) the chain is on the lumenal side. The helical transmembrane segment at 121 to 141 (VGICTAALFTAQWVMGFTSFL) threads the bilayer. Over 142–155 (LPCTPMAVRAFVKP) the chain is Cytoplasmic. R150 contributes to the L-ascorbate binding site. A helical membrane pass occupies residues 156–176 (THVWMGAMILVLSIVSCISGI). H157 and E178 together coordinate heme b. Residues 177–201 (NEKLFFVLKETTNGTKPYSALPPEA) are Lumenal-facing. The N-linked (GlcNAc...) asparagine glycan is linked to N189. Residues 202 to 222 (VAANSLGVIIVAFGLVVLKIL) traverse the membrane as a helical segment. The Cytoplasmic segment spans residues 223–247 (SNQMWQRPEPGDDEGVYRPLAYDGS). Q228 is a binding site for heme b.

Homodimer. It depends on heme b as a cofactor.

The protein resides in the late endosome membrane. The protein localises to the lysosome membrane. The enzyme catalyses Fe(3+)(out) + L-ascorbate(in) = monodehydro-L-ascorbate radical(in) + Fe(2+)(out) + H(+). In terms of biological role, transmembrane reductase that uses ascorbate as an electron donor in the cytoplasm and transfers electrons across membranes to reduce iron cations Fe(3+) into Fe(2+) in the lumen of the late endosome and lysosome. Reduced iron can then be extruded from the late endosome and lysosome to the cytoplasm by divalent metal-specific transporters. It is therefore most probably involved in endosomal and lysosomal cellular iron homeostasis. In Danio rerio (Zebrafish), this protein is Lysosomal membrane ascorbate-dependent ferrireductase CYB561A3 (cyb561a3a).